Here is a 175-residue protein sequence, read N- to C-terminus: Adenine phosphoribosyltransferase (175 aa).

The protein belongs to the purine/pyrimidine phosphoribosyltransferase family. Homodimer.

It is found in the cytoplasm. It carries out the reaction AMP + diphosphate = 5-phospho-alpha-D-ribose 1-diphosphate + adenine. The protein operates within purine metabolism; AMP biosynthesis via salvage pathway; AMP from adenine: step 1/1. In terms of biological role, catalyzes a salvage reaction resulting in the formation of AMP, that is energically less costly than de novo synthesis. This Synechococcus sp. (strain CC9902) protein is Adenine phosphoribosyltransferase.